Reading from the N-terminus, the 581-residue chain is Ras-specific guanine nucleotide-releasing factor RalGPS1 (581 aa).

Residues 1 to 31 (MYRRNGLPASVSITSRNTQDSSSSESLDGRS) form a disordered region. The region spanning 49 to 288 (TPEEFASQIT…YSLSLKIEPG (240 aa)) is the Ras-GEF domain. The segment at 320-339 (PDTSVVAHLPTPPPARHRKS) is disordered. The short motif at 329–332 (PTPP) is the PXXP element. Positions 455-567 (SITIEGPLRR…WHRHLAEACR (113 aa)) constitute a PH domain.

The protein localises to the cytoplasm. It is found in the cell membrane. Guanine nucleotide exchange factor. May be involved in cytoskeletal organization. The protein is Ras-specific guanine nucleotide-releasing factor RalGPS1 (ralgps1) of Danio rerio (Zebrafish).